The primary structure comprises 351 residues: 3-dehydroquinate synthase (351 aa).

NAD(+) contacts are provided by residues 60-65 (DGEEYK), 94-98 (GVISD), 118-119 (TT), K131, K140, and 158-161 (FLKT). Residues E173, H239, and H256 each coordinate Zn(2+).

Belongs to the sugar phosphate cyclases superfamily. Dehydroquinate synthase family. Co(2+) is required as a cofactor. Zn(2+) serves as cofactor. The cofactor is NAD(+).

The protein localises to the cytoplasm. The catalysed reaction is 7-phospho-2-dehydro-3-deoxy-D-arabino-heptonate = 3-dehydroquinate + phosphate. Its pathway is metabolic intermediate biosynthesis; chorismate biosynthesis; chorismate from D-erythrose 4-phosphate and phosphoenolpyruvate: step 2/7. Catalyzes the conversion of 3-deoxy-D-arabino-heptulosonate 7-phosphate (DAHP) to dehydroquinate (DHQ). This chain is 3-dehydroquinate synthase, found in Campylobacter jejuni subsp. jejuni serotype O:6 (strain 81116 / NCTC 11828).